We begin with the raw amino-acid sequence, 305 residues long: Recombination-associated protein RdgC (305 aa).

This sequence belongs to the RdgC family.

The protein localises to the cytoplasm. Its subcellular location is the nucleoid. In terms of biological role, may be involved in recombination. The polypeptide is Recombination-associated protein RdgC (Sodalis glossinidius (strain morsitans)).